A 158-amino-acid polypeptide reads, in one-letter code: Transcription elongation factor GreA (158 aa).

Over residues 24 to 43 (DVERPKASEAIGEARDKGDL) the composition is skewed to basic and acidic residues. Residues 24–47 (DVERPKASEAIGEARDKGDLSENA) are disordered. Residues 48–68 (EYDAAKEAQGLLEMKISKMEE) adopt a coiled-coil conformation.

This sequence belongs to the GreA/GreB family.

Its function is as follows. Necessary for efficient RNA polymerase transcription elongation past template-encoded arresting sites. The arresting sites in DNA have the property of trapping a certain fraction of elongating RNA polymerases that pass through, resulting in locked ternary complexes. Cleavage of the nascent transcript by cleavage factors such as GreA or GreB allows the resumption of elongation from the new 3'terminus. GreA releases sequences of 2 to 3 nucleotides. The chain is Transcription elongation factor GreA from Christiangramia forsetii (strain DSM 17595 / CGMCC 1.15422 / KT0803) (Gramella forsetii).